The primary structure comprises 491 residues: Katanin p60 ATPase-containing subunit A1 (491 aa).

Residues 1 to 29 are interaction with KATNB1; it reads MSLLMISENVKLAREYALLGNYDSAMVYY. Residues 1–75 form an interaction with dynein and NDEL1 region; that stretch reads MSLLMISENV…VKDIMKTLES (75 aa). An interaction with microtubules region spans residues 1 to 185; that stretch reads MSLLMISENV…EPETNKFDST (185 aa). 2 positions are modified to phosphoserine; by DYRK2: serine 42 and serine 109. Residues 87–185 form a disordered region; it reads QHDLPASEGE…EPETNKFDST (99 aa). A Phosphothreonine; by DYRK2 modification is found at threonine 133. Basic and acidic residues predominate over residues 145–169; it reads HNDRGKAVRCREKKEQNKGREEKNK. Serine 170 is modified (phosphoserine). Residue 249-256 participates in ATP binding; that stretch reads GPPGTGKT.

It belongs to the AAA ATPase family. Katanin p60 subunit A1 subfamily. As to quaternary structure, can homooligomerize into hexameric rings, which may be promoted by interaction with microtubules. Interacts with KATNB1, which may serve as a targeting subunit. Interacts with ASPM; the katanin complex formation KATNA1:KATNB1 is required for the association of ASPM Interacts with dynein and NDEL1. Associates with the E3 ligase complex containing DYRK2, EDD/UBR5, DDB1 and DCAF1 proteins (EDVP complex). Interacts with KLHL42 (via the kelch domains). Interacts with CUL3; the interaction is enhanced by KLHL42. Interacts with KATNB1 and KATNBL1. Interacts with CAMSAP2 and CAMSAP3; leading to regulate the length of CAMSAP-decorated microtubule stretches. In terms of processing, phosphorylation by DYRK2 triggers ubiquitination and subsequent degradation. Post-translationally, ubiquitinated by the BCR(KLHL42) E3 ubiquitin ligase complex, leading to its proteasomal degradation. Ubiquitinated by the EDVP E3 ligase complex and subsequently targeted for proteasomal degradation.

The protein localises to the cytoplasm. The protein resides in the midbody. Its subcellular location is the cytoskeleton. It is found in the microtubule organizing center. It localises to the centrosome. The protein localises to the spindle pole. The protein resides in the spindle. The catalysed reaction is n ATP + n H2O + a microtubule = n ADP + n phosphate + (n+1) alpha/beta tubulin heterodimers.. Its activity is regulated as follows. ATPase activity is stimulated by microtubules, which promote homooligomerization. ATP-dependent microtubule severing is stimulated by interaction with KATNB1. Catalytic subunit of a complex which severs microtubules in an ATP-dependent manner. Microtubule severing may promote rapid reorganization of cellular microtubule arrays and the release of microtubules from the centrosome following nucleation. Microtubule release from the mitotic spindle poles may allow depolymerization of the microtubule end proximal to the spindle pole, leading to poleward microtubule flux and poleward motion of chromosome. Microtubule release within the cell body of neurons may be required for their transport into neuronal processes by microtubule-dependent motor proteins. This transport is required for axonal growth. The protein is Katanin p60 ATPase-containing subunit A1 of Macaca fascicularis (Crab-eating macaque).